Here is a 90-residue protein sequence, read N- to C-terminus: Probable Fe(2+)-trafficking protein (90 aa).

This sequence belongs to the Fe(2+)-trafficking protein family.

Its function is as follows. Could be a mediator in iron transactions between iron acquisition and iron-requiring processes, such as synthesis and/or repair of Fe-S clusters in biosynthetic enzymes. This is Probable Fe(2+)-trafficking protein from Thioalkalivibrio sulfidiphilus (strain HL-EbGR7).